Consider the following 384-residue polypeptide: GDP/UDP-N,N'-diacetylbacillosamine 2-epimerase (hydrolyzing) (384 aa).

Belongs to the UDP-N-acetylglucosamine 2-epimerase family.

The enzyme catalyses GDP-N,N'-diacetylbacillosamine + H2O = 2,4-diacetamido-2,4,6-trideoxy-alpha-D-mannopyranose + GDP + H(+). It catalyses the reaction UDP-N,N'-diacetylbacillosamine + H2O = 2,4-diacetamido-2,4,6-trideoxy-alpha-D-mannopyranose + UDP + H(+). Its function is as follows. Involved in biosynthesis of legionaminic acid (5,7-diamino-3,5,7,9-tetradeoxy-D-glycero-D-galacto-non-2-ulosonic acid)(Leg), a sialic acid-like derivative that is incorporated into flagellin via O-linkage to Ser/Thr. Catalyzes the conversion of GDP-N,N'-diacetylbacillosamine (Bac2Ac4Ac) into 2,4-diacetamido-2,4,6-trideoxymannose and GDP. It can also use UDP-N,N'-diacetylbacillosamine however it generates small quantities of 2,4-diacetamido-2,4,6-trideoxymannose. The protein is GDP/UDP-N,N'-diacetylbacillosamine 2-epimerase (hydrolyzing) (legG) of Campylobacter jejuni subsp. jejuni serotype O:2 (strain ATCC 700819 / NCTC 11168).